Here is a 493-residue protein sequence, read N- to C-terminus: 3-octaprenyl-4-hydroxybenzoate carboxy-lyase (493 aa).

Mn(2+) is bound at residue Asn172. Prenylated FMN is bound by residues 175–177, 189–191, and 194–195; these read IYR, RWL, and RG. Glu238 serves as a coordination point for Mn(2+). Asp287 acts as the Proton donor in catalysis.

Belongs to the UbiD family. As to quaternary structure, homohexamer. It depends on prenylated FMN as a cofactor. Mn(2+) serves as cofactor.

The protein resides in the cell membrane. The catalysed reaction is a 4-hydroxy-3-(all-trans-polyprenyl)benzoate + H(+) = a 2-(all-trans-polyprenyl)phenol + CO2. It functions in the pathway cofactor biosynthesis; ubiquinone biosynthesis. In terms of biological role, catalyzes the decarboxylation of 3-octaprenyl-4-hydroxy benzoate to 2-octaprenylphenol, an intermediate step in ubiquinone biosynthesis. The polypeptide is 3-octaprenyl-4-hydroxybenzoate carboxy-lyase (Shewanella sp. (strain MR-4)).